We begin with the raw amino-acid sequence, 35 residues long: VGPGGECGGRFGGCAGGQCCSRFGFCGSGPKYCAH.

The region spanning 4 to 35 (GGECGGRFGGCAGGQCCSRFGFCGSGPKYCAH) is the Chitin-binding type-1 domain. Cystine bridges form between cysteine 7–cysteine 20, cysteine 14–cysteine 26, and cysteine 19–cysteine 33.

Contains 3 disulfide bonds. Expressed in leaf, flower, stem and seed with highest expression in leaf (at protein level).

Its function is as follows. Has antifungal activity against A.niger (IC(50)=5.4 uM), B.sorokiniana (IC(50)=2.0 uM), B.cinerea (IC(50)=1.6 uM), F.solani (IC(50)=3.7 uM) and A.alternata (IC(50)=5.0 uM). Binds chitin in vitro. Has no antibacterial activity at concentrations up to 10 uM. This is Antimicrobial peptide 3 from Stellaria media (Common chickweed).